The primary structure comprises 147 residues: SsrA-binding protein (147 aa).

Belongs to the SmpB family.

It localises to the cytoplasm. Its function is as follows. Required for rescue of stalled ribosomes mediated by trans-translation. Binds to transfer-messenger RNA (tmRNA), required for stable association of tmRNA with ribosomes. tmRNA and SmpB together mimic tRNA shape, replacing the anticodon stem-loop with SmpB. tmRNA is encoded by the ssrA gene; the 2 termini fold to resemble tRNA(Ala) and it encodes a 'tag peptide', a short internal open reading frame. During trans-translation Ala-aminoacylated tmRNA acts like a tRNA, entering the A-site of stalled ribosomes, displacing the stalled mRNA. The ribosome then switches to translate the ORF on the tmRNA; the nascent peptide is terminated with the 'tag peptide' encoded by the tmRNA and targeted for degradation. The ribosome is freed to recommence translation, which seems to be the essential function of trans-translation. This is SsrA-binding protein from Mycoplasmopsis agalactiae (strain NCTC 10123 / CIP 59.7 / PG2) (Mycoplasma agalactiae).